The sequence spans 865 residues: AP-1 complex subunit gamma-1 (865 aa).

The segment at 665 to 690 (AEPLETPVDEMTQSPQSSLSRAPSTS) is disordered. The segment covering 675–690 (MTQSPQSSLSRAPSTS) has biased composition (polar residues). The GAE domain occupies 746–860 (KSYPPIVVFD…LDQVDFGKLP (115 aa)).

The protein belongs to the adaptor complexes large subunit family. In terms of assembly, adaptor protein complex 1 (AP-1) is a heterotetramer composed of two large adaptins (gamma-type subunit apl4 and beta-type subunit apl2), a medium adaptin (mu-type subunit apm1) and a small adaptin (sigma-type subunit aps1). AP-1 interacts with clathrin.

It is found in the cytoplasmic vesicle. The protein resides in the clathrin-coated vesicle membrane. Its subcellular location is the golgi apparatus. Adaptins are components of the adaptor complexes which link clathrin to receptors in coated vesicles. Clathrin-associated protein complexes are believed to interact with the cytoplasmic tails of membrane proteins, leading to their selection and concentration. The AP-1 complex interacts directly with clathrin. In Schizosaccharomyces pombe (strain 972 / ATCC 24843) (Fission yeast), this protein is AP-1 complex subunit gamma-1 (apl4).